A 57-amino-acid polypeptide reads, in one-letter code: uncharacterized protein (57 aa).

Residues 15-37 (GLAGLICIGLTISSGFSGSSILI) traverse the membrane as a helical segment.

The protein resides in the membrane. This is an uncharacterized protein from Dictyostelium discoideum (Social amoeba).